Consider the following 424-residue polypeptide: tRNA(Met) cytidine acetate ligase (424 aa).

ATP-binding positions include 7–20, G102, N174, and R199; that span reads ITEY…HLHH.

It belongs to the TmcAL family.

It is found in the cytoplasm. It catalyses the reaction cytidine(34) in elongator tRNA(Met) + acetate + ATP = N(4)-acetylcytidine(34) in elongator tRNA(Met) + AMP + diphosphate. Functionally, catalyzes the formation of N(4)-acetylcytidine (ac(4)C) at the wobble position of elongator tRNA(Met), using acetate and ATP as substrates. First activates an acetate ion to form acetyladenylate (Ac-AMP) and then transfers the acetyl group to tRNA to form ac(4)C34. In Alkaliphilus metalliredigens (strain QYMF), this protein is tRNA(Met) cytidine acetate ligase.